A 166-amino-acid polypeptide reads, in one-letter code: Protein SprT (166 aa).

The region spanning 19-164 is the SprT-like domain; that stretch reads RDALARANLK…CVRCGDTLVA (146 aa). H78 serves as a coordination point for Zn(2+). E79 is a catalytic residue. H82 serves as a coordination point for Zn(2+).

Belongs to the SprT family. Zn(2+) is required as a cofactor.

Its subcellular location is the cytoplasm. The sequence is that of Protein SprT from Cronobacter sakazakii (strain ATCC BAA-894) (Enterobacter sakazakii).